The primary structure comprises 336 residues: UDP-glucose 4-epimerase (336 aa).

NAD(+)-binding positions include 11–12, 31–36, 58–59, 80–84, N99, S124, Y149, K153, and F178; these read YI, DNLINS, DI, and FAGLK. S124 and Y149 together coordinate substrate. Y149 acts as the Proton acceptor in catalysis. Residues N179, 199–200, 216–218, R231, and 290–293 contribute to the substrate site; these read NL, LVY, and RPGD.

This sequence belongs to the NAD(P)-dependent epimerase/dehydratase family. Homodimer. Requires NAD(+) as cofactor.

It catalyses the reaction UDP-alpha-D-glucose = UDP-alpha-D-galactose. Its pathway is carbohydrate metabolism; galactose metabolism. Its function is as follows. Involved in the metabolism of galactose. Catalyzes the conversion of UDP-galactose (UDP-Gal) to UDP-glucose (UDP-Glc) through a mechanism involving the transient reduction of NAD. This is UDP-glucose 4-epimerase (galE) from Yersinia enterocolitica.